The sequence spans 263 residues: Thiazole synthase (263 aa).

Residue lysine 100 is the Schiff-base intermediate with DXP of the active site. 1-deoxy-D-xylulose 5-phosphate-binding positions include glycine 161, 188-189 (AG), and 210-211 (NS).

It belongs to the ThiG family. In terms of assembly, homotetramer. Forms heterodimers with either ThiH or ThiS.

The protein resides in the cytoplasm. It catalyses the reaction [ThiS sulfur-carrier protein]-C-terminal-Gly-aminoethanethioate + 2-iminoacetate + 1-deoxy-D-xylulose 5-phosphate = [ThiS sulfur-carrier protein]-C-terminal Gly-Gly + 2-[(2R,5Z)-2-carboxy-4-methylthiazol-5(2H)-ylidene]ethyl phosphate + 2 H2O + H(+). It functions in the pathway cofactor biosynthesis; thiamine diphosphate biosynthesis. In terms of biological role, catalyzes the rearrangement of 1-deoxy-D-xylulose 5-phosphate (DXP) to produce the thiazole phosphate moiety of thiamine. Sulfur is provided by the thiocarboxylate moiety of the carrier protein ThiS. In vitro, sulfur can be provided by H(2)S. In Pseudoalteromonas translucida (strain TAC 125), this protein is Thiazole synthase.